We begin with the raw amino-acid sequence, 319 residues long: Methyltransferase tpcM (319 aa).

A methyltransferase domain region spans residues 63-155; the sequence is DVGAGIGPYA…QLRPGGTFAC (93 aa).

It belongs to the methyltransferase superfamily. In terms of tissue distribution, specifically expressed in conidia.

The protein operates within secondary metabolite biosynthesis. Methyltransferase; part of the gene cluster that mediates the biosynthesis of trypacidin, a mycotoxin with antiprotozoal activity and that plays a role in the infection process. The pathway begins with the synthesis of atrochrysone thioester by the polyketide synthase (PKS) tpcC. The atrochrysone carboxyl ACP thioesterase tpcB then breaks the thioester bond and releases the atrochrysone carboxylic acid from tpcC. The decarboxylase tpcK converts atrochrysone carboxylic acid to atrochrysone which is further reduced into emodin anthrone. The next step is performed by the emodin anthrone oxygenase tpcL that catalyzes the oxidation of emodinanthrone to emodin. Emodin O-methyltransferase encoded by tpcA catalyzes methylation of the 8-hydroxy group of emodin to form questin. Ring cleavage of questin by questin oxidase tpcI leads to desmethylsulochrin via several intermediates including questin epoxide. Another methylation step catalyzed by tpcM leads to the formation of sulochrin which is further converted to monomethylsulfochrin by tpcH. Finally, the tpcJ catalyzes the conversion of monomethylsulfochrin to trypacidin. Trypacidin is toxic for human pulmonary and bronchial epithelial cells by initiating the intracellular formation of nitric oxide (NO) and hydrogen peroxide (H(2)O(2)), thus triggering host necrotic cell death. The trypacidin pathway is also able to produce endocrocin via a distinct route from the endocrocin Enc pathway. This chain is Methyltransferase tpcM, found in Aspergillus fumigatus (strain ATCC MYA-4609 / CBS 101355 / FGSC A1100 / Af293) (Neosartorya fumigata).